The following is a 473-amino-acid chain: Phosphatidylserine synthase 1 (473 aa).

A2 carries the N-acetylalanine modification. The Cytoplasmic portion of the chain corresponds to 2 to 35 (ASCVGSRTLSKDDVNYKMHFRMINEQQVEDITID). The helical transmembrane segment at 36-56 (FFYRPHTITLLSFTIVSLMYF) threads the bilayer. Over 57-72 (AFTRDDSVPEDNIWRG) the chain is Lumenal. The helical transmembrane segment at 73–93 (ILSVIFFFLIISVLAFPNGPF) threads the bilayer. Topologically, residues 94-102 (TRPHPALWR) are cytoplasmic. Residues 103-123 (MVFGLSVLYFLFLVFLLFLNF) form a helical membrane-spanning segment. Topologically, residues 124-186 (EQVKSLMYWL…AMKALLIRSY (63 aa)) are lumenal. Residues 187-207 (GLCWTISITWELTELFFMHLL) traverse the membrane as a helical segment. Residues 208 to 216 (PNFAECWWD) lie on the Cytoplasmic side of the membrane. A helical transmembrane segment spans residues 217–237 (QVILDILLCNGGGIWLGMVVC). The Lumenal portion of the chain corresponds to 238-286 (RFLEMRTYHWASFKDIHTTTGKIKRAVLQFTPASWTYVRWFDPKSSFQR). Residues 287 to 307 (VAGVYLFMIIWQLTELNTFFL) traverse the membrane as a helical segment. The Cytoplasmic portion of the chain corresponds to 308 to 319 (KHIFVFQASHPL). Residues 320–342 (SWGRILFIGGITAPTVRQYYAYL) traverse the membrane as a helical segment. The Lumenal segment spans residues 343–355 (TDTQCKRVGTQCW). A helical transmembrane segment spans residues 356-376 (VFGVIGFLEAIVCIKFGQDLF). Over 377–383 (SKTQILY) the chain is Cytoplasmic. Residues 384–404 (VVLWLLCVAFTTFLCLYGMIW) form a helical membrane-spanning segment. Topologically, residues 405–473 (YAEHYGHREK…SKVTNGVGKK (69 aa)) are lumenal. 4 positions are modified to phosphoserine: S417, S425, S442, and S454. A disordered region spans residues 430 to 473 (WHHRKGTKGSEDSPPKHAGNNESHSSRRRNRHSKSKVTNGVGKK). Residues 455–464 (SRRRNRHSKS) show a composition bias toward basic residues.

The protein belongs to the phosphatidyl serine synthase family.

The protein resides in the endoplasmic reticulum membrane. It catalyses the reaction a 1,2-diacyl-sn-glycero-3-phosphoethanolamine + L-serine = a 1,2-diacyl-sn-glycero-3-phospho-L-serine + ethanolamine. It carries out the reaction a 1,2-diacyl-sn-glycero-3-phosphocholine + L-serine = a 1,2-diacyl-sn-glycero-3-phospho-L-serine + choline. It functions in the pathway phospholipid metabolism; phosphatidylserine biosynthesis. Its activity is regulated as follows. Requires calcium ions. Inhibited by exogenous phosphatidylserine. Catalyzes a base-exchange reaction in which the polar head group of phosphatidylethanolamine (PE) or phosphatidylcholine (PC) is replaced by L-serine. Catalyzes mainly the conversion of phosphatidylcholine. Also converts, in vitro and to a lesser extent, phosphatidylethanolamine. This chain is Phosphatidylserine synthase 1 (PTDSS1), found in Homo sapiens (Human).